The sequence spans 566 residues: E3 ubiquitin-protein ligase Rnf220 (566 aa).

A Glycyl lysine isopeptide (Lys-Gly) (interchain with G-Cter in SUMO2) cross-link involves residue Lys277. The disordered stretch occupies residues 277-300 (KREGDSPTASPHSSATEDLHHSDR). Positions 291-300 (ATEDLHHSDR) are enriched in basic and acidic residues. Position 390 is a phosphoserine (Ser390). Residues 485–513 (EESAVTTFEALKARVRELERQLSRGDRYK) adopt a coiled-coil conformation. The interval 514-522 (CLICMDSYS) is required for targeting to the cytoplasm. The RING-type zinc finger occupies 514–553 (CLICMDSYSMPLTSIQCWHVHCEECWLRTLGAKKLCPQCN).

Interacts with SIN3B. Interacts with CTNNB1 (via Armadillo repeats 2-8). Interacts with USP7 (via MATH domain). Post-translationally, auto-ubiquitinated; leads to proteasomal degradation. In terms of tissue distribution, in the brain, expressed in the hippocampus, telenecephalon and cerebellum. No expression in astro glial cells or in neural progenitor cells.

The protein localises to the cytoplasm. It localises to the nucleus. The enzyme catalyses S-ubiquitinyl-[E2 ubiquitin-conjugating enzyme]-L-cysteine + [acceptor protein]-L-lysine = [E2 ubiquitin-conjugating enzyme]-L-cysteine + N(6)-ubiquitinyl-[acceptor protein]-L-lysine.. The protein operates within protein modification; protein ubiquitination. Functionally, E3 ubiquitin-protein ligase that promotes the ubiquitination and proteasomal degradation of SIN3B. Independently of its E3 ligase activity, acts as a CTNNB1 stabilizer through USP7-mediated deubiquitination of CTNNB1 and promotes Wnt signaling. Plays a critical role in the regulation of nuclear lamina. The polypeptide is E3 ubiquitin-protein ligase Rnf220 (Rnf220) (Mus musculus (Mouse)).